A 454-amino-acid polypeptide reads, in one-letter code: Bifunctional protein GlmU (454 aa).

Residues 1 to 226 (MLAVAVLAAG…PDEVNGINNR (226 aa)) form a pyrophosphorylase region. UDP-N-acetyl-alpha-D-glucosamine contacts are provided by residues 7 to 10 (LAAG), lysine 21, glutamine 73, and 78 to 79 (GT). Aspartate 103 is a binding site for Mg(2+). Glycine 140, glutamate 155, asparagine 170, and asparagine 224 together coordinate UDP-N-acetyl-alpha-D-glucosamine. Asparagine 224 provides a ligand contact to Mg(2+). Positions 227–247 (RQLAQCEGVLQQRLRDHWMDE) are linker. An N-acetyltransferase region spans residues 248–454 (GVTFVDPASC…WDRNTQAAQS (207 aa)). Residues arginine 329 and lysine 347 each coordinate UDP-N-acetyl-alpha-D-glucosamine. The active-site Proton acceptor is histidine 359. 2 residues coordinate UDP-N-acetyl-alpha-D-glucosamine: tyrosine 362 and asparagine 373. Residues alanine 376, alanine 419, and arginine 436 each coordinate acetyl-CoA.

This sequence in the N-terminal section; belongs to the N-acetylglucosamine-1-phosphate uridyltransferase family. In the C-terminal section; belongs to the transferase hexapeptide repeat family. Homotrimer. The cofactor is Mg(2+).

The protein resides in the cytoplasm. The enzyme catalyses alpha-D-glucosamine 1-phosphate + acetyl-CoA = N-acetyl-alpha-D-glucosamine 1-phosphate + CoA + H(+). The catalysed reaction is N-acetyl-alpha-D-glucosamine 1-phosphate + UTP + H(+) = UDP-N-acetyl-alpha-D-glucosamine + diphosphate. The protein operates within nucleotide-sugar biosynthesis; UDP-N-acetyl-alpha-D-glucosamine biosynthesis; N-acetyl-alpha-D-glucosamine 1-phosphate from alpha-D-glucosamine 6-phosphate (route II): step 2/2. It participates in nucleotide-sugar biosynthesis; UDP-N-acetyl-alpha-D-glucosamine biosynthesis; UDP-N-acetyl-alpha-D-glucosamine from N-acetyl-alpha-D-glucosamine 1-phosphate: step 1/1. It functions in the pathway bacterial outer membrane biogenesis; LPS lipid A biosynthesis. In terms of biological role, catalyzes the last two sequential reactions in the de novo biosynthetic pathway for UDP-N-acetylglucosamine (UDP-GlcNAc). The C-terminal domain catalyzes the transfer of acetyl group from acetyl coenzyme A to glucosamine-1-phosphate (GlcN-1-P) to produce N-acetylglucosamine-1-phosphate (GlcNAc-1-P), which is converted into UDP-GlcNAc by the transfer of uridine 5-monophosphate (from uridine 5-triphosphate), a reaction catalyzed by the N-terminal domain. The protein is Bifunctional protein GlmU of Synechococcus sp. (strain CC9311).